Consider the following 334-residue polypeptide: Dual specificity mitogen-activated protein kinase kinase 6 (334 aa).

The segment covering 1 to 11 has biased composition (basic residues); sequence MSQSKGKKRNP. Positions 1-34 are disordered; the sequence is MSQSKGKKRNPGLKIPKEAFEQPQTSSTPPRDLD. The segment at 4–19 is d domain; the sequence is SKGKKRNPGLKIPKEA. The Protein kinase domain maps to 53–314; it reads LEPIMELGRG…YPELMQHPFF (262 aa). ATP contacts are provided by residues 59–67 and K82; that span reads LGRGAYGVV. D179 acts as the Proton acceptor in catalysis. S207 bears the (Microbial infection) O-acetylserine; by Yersinia YopJ; alternate mark. S207 is modified (phosphoserine; by MAP3K; alternate). T211 is modified ((Microbial infection) O-acetylthreonine; by Yersinia YopJ; alternate). T211 bears the Phosphothreonine; by MAP3K; alternate mark. Residues 311–334 form a DVD domain region; it reads HPFFTLHESKGTDVASFVKLILGD.

This sequence belongs to the protein kinase superfamily. STE Ser/Thr protein kinase family. MAP kinase kinase subfamily. As to quaternary structure, dimer. Interacts (via its D domain) with its substrates MAPK11, MAPK12, MAPK13 and MAPK14. Interacts (via its DVD domain) with MAP3Ks activators like MAP3K5/ASK1, MAP3K1/MEKK1, MAP3K2/MEKK2, MAP3K3/MEKK3, MAP3K4/MEKK4, MAP3K7/TAK1, MAP3K11/MLK3 and MAP3K17/TAOK2. Interacts with DCTN1. Interacts with EIF2AK2/PKR. In terms of assembly, (Microbial infection) Interacts with Yersinia YopJ. Weakly autophosphorylated. Phosphorylated at Ser-207 and Thr-211 by the majority of M3Ks, such as MAP3K5/ASK1, MAP3K1/MEKK1, MAP3K2/MEKK2, MAP3K3/MEKK3, MAP3K4/MEKK4, MAP3K7/TAK1, MAP3K11/MLK3 and MAP3K17/TAOK2. In terms of processing, in response to genotoxic stress, MAP3K-phosphorylated MAP2K6 is ubiquitinated and degraded by the SCF(FBXO31) complex. Post-translationally, (Microbial infection) Acetylation of Ser-207 and Thr-211 by Yersinia YopJ prevents phosphorylation and activation, thus blocking the MAPK signaling pathway. In terms of tissue distribution, isoform 2 is only expressed in skeletal muscle. Isoform 1 is expressed in skeletal muscle, heart, and in lesser extent in liver or pancreas.

It localises to the nucleus. It is found in the cytoplasm. Its subcellular location is the cytoskeleton. It catalyses the reaction L-seryl-[protein] + ATP = O-phospho-L-seryl-[protein] + ADP + H(+). The enzyme catalyses L-threonyl-[protein] + ATP = O-phospho-L-threonyl-[protein] + ADP + H(+). The catalysed reaction is L-tyrosyl-[protein] + ATP = O-phospho-L-tyrosyl-[protein] + ADP + H(+). Its activity is regulated as follows. Activated by dual phosphorylation on Ser-207 and Thr-211 in response to a variety of cellular stresses, including UV radiation, osmotic shock, hypoxia, inflammatory cytokines, interferon gamma (IFNG), and less often by growth factors. MAP2K6/MKK6 is activated by the majority of M3Ks, such as MAP3K5/ASK1, MAP3K1/MEKK1, MAP3K2/MEKK2, MAP3K3/MEKK3, MAP3K4/MEKK4, MAP3K7/TAK1, MAP3K11/MLK3 and MAP3K17/TAOK2. Dual specificity protein kinase which acts as an essential component of the MAP kinase signal transduction pathway. With MAP3K3/MKK3, catalyzes the concomitant phosphorylation of a threonine and a tyrosine residue in the MAP kinases p38 MAPK11, MAPK12, MAPK13 and MAPK14 and plays an important role in the regulation of cellular responses to cytokines and all kinds of stresses. Especially, MAP2K3/MKK3 and MAP2K6/MKK6 are both essential for the activation of MAPK11 and MAPK13 induced by environmental stress, whereas MAP2K6/MKK6 is the major MAPK11 activator in response to TNF. MAP2K6/MKK6 also phosphorylates and activates PAK6. The p38 MAP kinase signal transduction pathway leads to direct activation of transcription factors. Nuclear targets of p38 MAP kinase include the transcription factors ATF2 and ELK1. Within the p38 MAPK signal transduction pathway, MAP3K6/MKK6 mediates phosphorylation of STAT4 through MAPK14 activation, and is therefore required for STAT4 activation and STAT4-regulated gene expression in response to IL-12 stimulation. The pathway is also crucial for IL-6-induced SOCS3 expression and down-regulation of IL-6-mediated gene induction; and for IFNG-dependent gene transcription. Has a role in osteoclast differentiation through NF-kappa-B transactivation by TNFSF11, and in endochondral ossification and since SOX9 is another likely downstream target of the p38 MAPK pathway. MAP2K6/MKK6 mediates apoptotic cell death in thymocytes. Acts also as a regulator for melanocytes dendricity, through the modulation of Rho family GTPases. This chain is Dual specificity mitogen-activated protein kinase kinase 6 (MAP2K6), found in Homo sapiens (Human).